Consider the following 1382-residue polypeptide: DNA-directed RNA polymerase subunit beta'' (1382 aa).

4 residues coordinate Zn(2+): Cys-224, Cys-294, Cys-301, and Cys-304.

The protein belongs to the RNA polymerase beta' chain family. RpoC2 subfamily. In plastids the minimal PEP RNA polymerase catalytic core is composed of four subunits: alpha, beta, beta', and beta''. When a (nuclear-encoded) sigma factor is associated with the core the holoenzyme is formed, which can initiate transcription. Zn(2+) serves as cofactor.

It is found in the plastid. The protein localises to the chloroplast. It catalyses the reaction RNA(n) + a ribonucleoside 5'-triphosphate = RNA(n+1) + diphosphate. In terms of biological role, DNA-dependent RNA polymerase catalyzes the transcription of DNA into RNA using the four ribonucleoside triphosphates as substrates. In Liriodendron tulipifera (Tuliptree), this protein is DNA-directed RNA polymerase subunit beta''.